The chain runs to 251 residues: tRNA1(Val) (adenine(37)-N6)-methyltransferase (251 aa).

This sequence belongs to the methyltransferase superfamily. tRNA (adenine-N(6)-)-methyltransferase family.

The protein resides in the cytoplasm. It carries out the reaction adenosine(37) in tRNA1(Val) + S-adenosyl-L-methionine = N(6)-methyladenosine(37) in tRNA1(Val) + S-adenosyl-L-homocysteine + H(+). Its function is as follows. Specifically methylates the adenine in position 37 of tRNA(1)(Val) (anticodon cmo5UAC). This Yersinia enterocolitica serotype O:8 / biotype 1B (strain NCTC 13174 / 8081) protein is tRNA1(Val) (adenine(37)-N6)-methyltransferase.